Reading from the N-terminus, the 334-residue chain is Glyceraldehyde-3-phosphate dehydrogenase (334 aa).

Residues 12–13 (TI) and Gly-111 each bind NAD(+). Residue 140–142 (SCN) participates in D-glyceraldehyde 3-phosphate binding. The active-site Nucleophile is the Cys-141. Arg-167 lines the NAD(+) pocket. Residue 192–193 (HG) participates in D-glyceraldehyde 3-phosphate binding. An NAD(+)-binding site is contributed by Gln-298.

This sequence belongs to the glyceraldehyde-3-phosphate dehydrogenase family. As to quaternary structure, homotetramer.

Its subcellular location is the cytoplasm. It carries out the reaction D-glyceraldehyde 3-phosphate + phosphate + NADP(+) = (2R)-3-phospho-glyceroyl phosphate + NADPH + H(+). It catalyses the reaction D-glyceraldehyde 3-phosphate + phosphate + NAD(+) = (2R)-3-phospho-glyceroyl phosphate + NADH + H(+). It functions in the pathway carbohydrate degradation; glycolysis; pyruvate from D-glyceraldehyde 3-phosphate: step 1/5. In Thermococcus sibiricus (strain DSM 12597 / MM 739), this protein is Glyceraldehyde-3-phosphate dehydrogenase.